Consider the following 385-residue polypeptide: Gibberellin 20 oxidase 5 (385 aa).

Positions 224–324 (DGSGIFRCNY…RRSLVFFSCP (101 aa)) constitute a Fe2OG dioxygenase domain. Residues histidine 249, aspartate 251, and histidine 305 each contribute to the Fe cation site. The active site involves arginine 315.

Belongs to the iron/ascorbate-dependent oxidoreductase family. GA20OX subfamily. Fe(2+) is required as a cofactor. The cofactor is L-ascorbate. In terms of tissue distribution, expressed in 3-day-old seedlings and siliques. Detected in dry seeds, roots, old leaves and inflorescences.

It carries out the reaction gibberellin A12 + 2 2-oxoglutarate + 3 O2 + H(+) = gibberellin A9 + 2 succinate + 3 CO2 + 2 H2O. The enzyme catalyses gibberellin A53 + 2 2-oxoglutarate + 3 O2 + H(+) = gibberellin A20 + 2 succinate + 3 CO2 + 2 H2O. It participates in plant hormone biosynthesis; gibberellin biosynthesis. Key oxidase enzyme in the biosynthesis of gibberellin that catalyzes the conversion of GA12 and GA53 to GA9 and GA20 respectively, via a three-step oxidation at C-20 of the GA skeleton. The polypeptide is Gibberellin 20 oxidase 5 (GA20OX5) (Arabidopsis thaliana (Mouse-ear cress)).